Reading from the N-terminus, the 529-residue chain is Ribonuclease Y (529 aa).

The chain crosses the membrane as a helical span at residues 4 to 24 (GLIYISLEVLVACLITALIMY). The 82-residue stretch at 216-297 (LTTRIALPCS…NRIEEVYHRV (82 aa)) folds into the KH domain. Positions 342–435 (ALQHSKEVAL…VCAADALSAG (94 aa)) constitute an HD domain.

The protein belongs to the RNase Y family.

It is found in the cell membrane. Functionally, endoribonuclease that initiates mRNA decay. This is Ribonuclease Y from Helicobacter pylori (strain HPAG1).